Reading from the N-terminus, the 313-residue chain is 4-hydroxy-3-methylbut-2-enyl diphosphate reductase (313 aa).

Cys12 lines the [4Fe-4S] cluster pocket. (2E)-4-hydroxy-3-methylbut-2-enyl diphosphate is bound by residues His41 and His74. 2 residues coordinate dimethylallyl diphosphate: His41 and His74. Residues His41 and His74 each coordinate isopentenyl diphosphate. Cys96 is a [4Fe-4S] cluster binding site. (2E)-4-hydroxy-3-methylbut-2-enyl diphosphate is bound at residue His124. His124 is a binding site for dimethylallyl diphosphate. Position 124 (His124) interacts with isopentenyl diphosphate. Residue Glu126 is the Proton donor of the active site. Thr167 contributes to the (2E)-4-hydroxy-3-methylbut-2-enyl diphosphate binding site. Cys197 contributes to the [4Fe-4S] cluster binding site. The (2E)-4-hydroxy-3-methylbut-2-enyl diphosphate site is built by Ser225, Ser226, Asn227, and Ser269. Residues Ser225, Ser226, Asn227, and Ser269 each contribute to the dimethylallyl diphosphate site. Residues Ser225, Ser226, Asn227, and Ser269 each coordinate isopentenyl diphosphate.

It belongs to the IspH family. The cofactor is [4Fe-4S] cluster.

The catalysed reaction is isopentenyl diphosphate + 2 oxidized [2Fe-2S]-[ferredoxin] + H2O = (2E)-4-hydroxy-3-methylbut-2-enyl diphosphate + 2 reduced [2Fe-2S]-[ferredoxin] + 2 H(+). It catalyses the reaction dimethylallyl diphosphate + 2 oxidized [2Fe-2S]-[ferredoxin] + H2O = (2E)-4-hydroxy-3-methylbut-2-enyl diphosphate + 2 reduced [2Fe-2S]-[ferredoxin] + 2 H(+). Its pathway is isoprenoid biosynthesis; dimethylallyl diphosphate biosynthesis; dimethylallyl diphosphate from (2E)-4-hydroxy-3-methylbutenyl diphosphate: step 1/1. It functions in the pathway isoprenoid biosynthesis; isopentenyl diphosphate biosynthesis via DXP pathway; isopentenyl diphosphate from 1-deoxy-D-xylulose 5-phosphate: step 6/6. Catalyzes the conversion of 1-hydroxy-2-methyl-2-(E)-butenyl 4-diphosphate (HMBPP) into a mixture of isopentenyl diphosphate (IPP) and dimethylallyl diphosphate (DMAPP). Acts in the terminal step of the DOXP/MEP pathway for isoprenoid precursor biosynthesis. This chain is 4-hydroxy-3-methylbut-2-enyl diphosphate reductase, found in Methylococcus capsulatus (strain ATCC 33009 / NCIMB 11132 / Bath).